A 452-amino-acid chain; its full sequence is CASP-like protein 4A1 (452 aa).

Residues 1-17 (MGLRDSLKEREDRRSSE) are compositionally biased toward basic and acidic residues. Disordered regions lie at residues 1 to 39 (MGLR…RKES), 71 to 147 (RAGP…ARSS), and 164 to 283 (AKYV…VQFR). Over 1-305 (MGLRDSLKER…KRRAAAMQRT (305 aa)) the chain is Cytoplasmic. Over residues 25-34 (SWMTRESTTG) the composition is skewed to polar residues. Low complexity-rich tracts occupy residues 105-126 (QAQA…TGSG) and 190-205 (GWYS…AAPP). Pro residues predominate over residues 211–272 (DPPPAPPRRQ…TAPAPAPVPA (62 aa)). Residues 306 to 326 (ALLARGAAAGLCLAALAVLAA) form a helical membrane-spanning segment. The Extracellular segment spans residues 327–347 (DTRKGWARDSYSNYTQFRYSE). The N-linked (GlcNAc...) asparagine glycan is linked to Asn-339. The chain crosses the membrane as a helical span at residues 348–368 (AVNVIGFIYSVFQFVALVELM). Residues 369 to 389 (RRNKHLIPHPKRDLFDFTMDQ) are Cytoplasmic-facing. The helical transmembrane segment at 390–406 (VLTYLLISSSSSATARV) threads the bilayer. Residues 407-423 (SDLIDNWGSDPFPSMAN) are Extracellular-facing. A glycan (N-linked (GlcNAc...) asparagine) is linked at Asn-423. The helical transmembrane segment at 424–444 (GSIAISFLAFAVFAICSLISA) threads the bilayer. Residues 445–452 (YNLFRRDV) are Cytoplasmic-facing.

Belongs to the Casparian strip membrane proteins (CASP) family. In terms of assembly, homodimer and heterodimers.

Its subcellular location is the cell membrane. The protein is CASP-like protein 4A1 of Sorghum bicolor (Sorghum).